Consider the following 775-residue polypeptide: Dipeptidyl peptidase 4 (775 aa).

Residues 1–15 (MKLLSLLMLAGIAQA) form the signal peptide. Residues Asn81, Asn111, Asn170, and Asn219 are each glycosylated (N-linked (GlcNAc...) asparagine). Catalysis depends on charge relay system residues Ser613, Asp690, and His725.

It belongs to the peptidase S9B family.

It localises to the secreted. It catalyses the reaction Release of an N-terminal dipeptide, Xaa-Yaa-|-Zaa-, from a polypeptide, preferentially when Yaa is Pro, provided Zaa is neither Pro nor hydroxyproline.. Its function is as follows. Extracellular dipeptidyl-peptidase which removes N-terminal dipeptides sequentially from polypeptides having unsubstituted N-termini provided that the penultimate residue is proline. Contributes to pathogenicity. In Trichophyton tonsurans (Scalp ringworm fungus), this protein is Dipeptidyl peptidase 4 (DPP4).